Consider the following 86-residue polypeptide: Small ribosomal subunit protein uS17 (86 aa).

It belongs to the universal ribosomal protein uS17 family. Part of the 30S ribosomal subunit.

One of the primary rRNA binding proteins, it binds specifically to the 5'-end of 16S ribosomal RNA. This is Small ribosomal subunit protein uS17 from Caldicellulosiruptor saccharolyticus (strain ATCC 43494 / DSM 8903 / Tp8T 6331).